The sequence spans 133 residues: Putative biopolymer transport protein ExbD-like 2 (133 aa).

Over 1–9 (MKKVESMNV) the chain is Cytoplasmic. Residues 10-30 (VPFIDIMLVLLVIVLTTASFV) form a helical membrane-spanning segment. At 31–133 (QTSKLPISIP…LVEDKKNQKN (103 aa)) the chain is on the periplasmic side.

The protein belongs to the ExbD/TolR family.

The protein resides in the cell inner membrane. The chain is Putative biopolymer transport protein ExbD-like 2 from Helicobacter pylori (strain J99 / ATCC 700824) (Campylobacter pylori J99).